Consider the following 822-residue polypeptide: DNA-directed RNA polymerase subunit beta N-terminal section (822 aa).

A disordered region spans residues 376–408 (ELTEGNPSSKSQTKNKTSASKKSKTLNVANTKG). Positions 383-393 (SSKSQTKNKTS) are enriched in low complexity.

This sequence belongs to the RNA polymerase beta chain family. In terms of assembly, in plastids the minimal PEP RNA polymerase catalytic core is composed of four subunits: alpha, beta, beta', and beta''. When a (nuclear-encoded) sigma factor is associated with the core the holoenzyme is formed, which can initiate transcription.

It is found in the plastid. The protein resides in the chloroplast. The catalysed reaction is RNA(n) + a ribonucleoside 5'-triphosphate = RNA(n+1) + diphosphate. DNA-dependent RNA polymerase catalyzes the transcription of DNA into RNA using the four ribonucleoside triphosphates as substrates. The chain is DNA-directed RNA polymerase subunit beta N-terminal section (rpoB1) from Chlamydomonas reinhardtii (Chlamydomonas smithii).